Reading from the N-terminus, the 144-residue chain is Nucleoside diphosphate kinase (144 aa).

ATP-binding residues include K5, F53, R81, T87, R98, and N108. The active-site Pros-phosphohistidine intermediate is H111.

The protein belongs to the NDK family. Requires Mg(2+) as cofactor.

It carries out the reaction a 2'-deoxyribonucleoside 5'-diphosphate + ATP = a 2'-deoxyribonucleoside 5'-triphosphate + ADP. It catalyses the reaction a ribonucleoside 5'-diphosphate + ATP = a ribonucleoside 5'-triphosphate + ADP. In terms of biological role, major role in the synthesis of nucleoside triphosphates other than ATP. The ATP gamma phosphate is transferred to the NDP beta phosphate via a ping-pong mechanism, using a phosphorylated active-site intermediate. The polypeptide is Nucleoside diphosphate kinase (Solanum lycopersicum (Tomato)).